Consider the following 118-residue polypeptide: UPF0102 protein Csac_2148 (118 aa).

This sequence belongs to the UPF0102 family.

The chain is UPF0102 protein Csac_2148 from Caldicellulosiruptor saccharolyticus (strain ATCC 43494 / DSM 8903 / Tp8T 6331).